An 80-amino-acid chain; its full sequence is Small ribosomal subunit protein bS18 (80 aa).

This sequence belongs to the bacterial ribosomal protein bS18 family. As to quaternary structure, part of the 30S ribosomal subunit. Forms a tight heterodimer with protein bS6.

Functionally, binds as a heterodimer with protein bS6 to the central domain of the 16S rRNA, where it helps stabilize the platform of the 30S subunit. The chain is Small ribosomal subunit protein bS18 from Staphylococcus saprophyticus subsp. saprophyticus (strain ATCC 15305 / DSM 20229 / NCIMB 8711 / NCTC 7292 / S-41).